Reading from the N-terminus, the 181-residue chain is Transcriptional repressor NrdR (181 aa).

Residues 3–34 (CLFCQHTYTRVIDSRVSEDGATIRRRRECEAC) fold into a zinc finger. An ATP-cone domain is found at 49–139 (PVIIKKDGGR…VYRSFQDVAD (91 aa)).

It belongs to the NrdR family. Zn(2+) serves as cofactor.

Its function is as follows. Negatively regulates transcription of bacterial ribonucleotide reductase nrd genes and operons by binding to NrdR-boxes. This is Transcriptional repressor NrdR from Xylella fastidiosa (strain 9a5c).